A 458-amino-acid chain; its full sequence is Tetratricopeptide repeat protein 23-like (458 aa).

Coiled-coil stretches lie at residues 175–198 (GKQA…LNNG) and 246–278 (TSEL…QAYS).

The protein resides in the cytoplasm. It localises to the cytoskeleton. Its subcellular location is the microtubule organizing center. The protein localises to the centrosome. It is found in the spindle. The protein resides in the midbody. This Mus musculus (Mouse) protein is Tetratricopeptide repeat protein 23-like (Ttc23l).